Consider the following 620-residue polypeptide: DNA primase (620 aa).

The CHC2-type zinc-finger motif lies at 38–62 (CPFHADQNPSMTVSVAKNIFKCFSC). The Toprim domain occupies 266-350 (LKLYLVEGYF…IVEVVDWNQA (85 aa)). Mg(2+) contacts are provided by Glu-272, Asp-319, and Asp-321.

Belongs to the DnaG primase family. As to quaternary structure, monomer. Interacts with DnaB. It depends on Zn(2+) as a cofactor. Mg(2+) serves as cofactor.

It carries out the reaction ssDNA + n NTP = ssDNA/pppN(pN)n-1 hybrid + (n-1) diphosphate.. Its function is as follows. RNA polymerase that catalyzes the synthesis of short RNA molecules used as primers for DNA polymerase during DNA replication. The protein is DNA primase of Mycoplasma pneumoniae (strain ATCC 29342 / M129 / Subtype 1) (Mycoplasmoides pneumoniae).